The sequence spans 288 residues: Acetyl-coenzyme A carboxylase carboxyl transferase subunit beta (288 aa).

Residues 34 to 288 form the CoA carboxyltransferase N-terminal domain; that stretch reads LFAKCPACKH…HLVAFHGGGQ (255 aa). Residues cysteine 38, cysteine 41, cysteine 56, and cysteine 59 each coordinate Zn(2+). Residues 38–59 form a C4-type zinc finger; the sequence is CPACKHMIYKKDLGLAKICPTC.

Belongs to the AccD/PCCB family. Acetyl-CoA carboxylase is a heterohexamer composed of biotin carboxyl carrier protein (AccB), biotin carboxylase (AccC) and two subunits each of ACCase subunit alpha (AccA) and ACCase subunit beta (AccD). The cofactor is Zn(2+).

The protein localises to the cytoplasm. It catalyses the reaction N(6)-carboxybiotinyl-L-lysyl-[protein] + acetyl-CoA = N(6)-biotinyl-L-lysyl-[protein] + malonyl-CoA. It functions in the pathway lipid metabolism; malonyl-CoA biosynthesis; malonyl-CoA from acetyl-CoA: step 1/1. Component of the acetyl coenzyme A carboxylase (ACC) complex. Biotin carboxylase (BC) catalyzes the carboxylation of biotin on its carrier protein (BCCP) and then the CO(2) group is transferred by the transcarboxylase to acetyl-CoA to form malonyl-CoA. The polypeptide is Acetyl-coenzyme A carboxylase carboxyl transferase subunit beta (Streptococcus pyogenes serotype M4 (strain MGAS10750)).